The chain runs to 745 residues: MPFPVTTQGSQQTQPPQKHYGITSPISLAAPKETDCVLTQKLIETLKPFGVFEEEEELQRRILILGKLNNLVKEWIREISESKNLPQSVIENVGGKIFTFGSYRLGVHTKGADIDALCVAPRHVDRSDFFTSFYDKLKLQEEVKDLRAVEEAFVPVIKLCFDGIEIDILFARLALQTIPEDLDLRDDSLLKNLDIRCIRSLNGCRVTDEILHLVPNIDNFRLTLRAIKLWAKRHNIYSNILGFLGGVSWAMLVARTCQLYPNAIASTLVHKFFLVFSKWEWPNPVLLKQPEECNLNLPVWDPRVNPSDRYHLMPIITPAYPQQNSTYNVSVSTRMVMVEEFKQGLAITDEILLSKAEWSKLFEAPNFFQKYKHYIVLLASAPTEKQRLEWVGLVESKIRILVGSLEKNEFITLAHVNPQSFPAPKENPDKEEFRTMWVIGLVFKKTENSENLSVDLTYDIQSFTDTVYRQAINSKMFEVDMKIAAMHVKRKQLHQLLPNHVLQKKKKHSTEGVKLTALNDSSLDLSMDSDNSMSVPSPTSATKTSPLNSSGSSQGRNSPAPAVTAASVTNIQATEVSVPQVNSSESSGGTSSESIPQTATQPAISPPPKPTVSRVVSSTRLVNPPPRSSGNAATSGNAATKIPTPIVGVKRTSSPHKEESPKKTKTEEDETSEDANCLALSGHDKTEAKEQLDTETSTTQSETIQTAASLLASQKTSSTDLSDIPALPANPIPVIKNSIKLRLNR.

Over residues 1 to 17 (MPFPVTTQGSQQTQPPQ) the composition is skewed to low complexity. The interval 1–22 (MPFPVTTQGSQQTQPPQKHYGI) is disordered. 2 positions are modified to phosphoserine: S10 and S24. Residues 100–102 (FGS), T109, 113–115 (DID), D167, K228, Y237, and 246–247 (GV) each bind ATP. Mg(2+)-binding residues include D113, D115, and D167. Glycyl lysine isopeptide (Lys-Gly) (interchain with G-Cter in SUMO) cross-links involve residues K444, K445, K506, and K507. Residues 490 to 507 (RKQLHQLLPNHVLQKKKK) carry the Nuclear localization signal 1 motif. The interval 508-643 (HSTEGVKLTA…TSGNAATKIP (136 aa)) is ser/Thr-rich. Low complexity predominate over residues 523-534 (LDLSMDSDNSMS). Disordered regions lie at residues 523 to 565 (LDLS…AVTA) and 577 to 704 (SVPQ…SETI). Over residues 535–557 (VPSPTSATKTSPLNSSGSSQGRN) the composition is skewed to polar residues. Residues S537 and S558 each carry the phosphoserine modification. Composition is skewed to low complexity over residues 583 to 594 (SSESSGGTSSES) and 611 to 640 (TVSRVVSSTRLVNPPPRSSGNAATSGNAAT). N6-acetyllysine occurs at positions 641 and 650. The Nuclear localization signal 2 motif lies at 650–665 (KRTSSPHKEESPKKTK). Basic and acidic residues-rich tracts occupy residues 655 to 666 (PHKEESPKKTKT) and 682 to 692 (GHDKTEAKEQL). The segment at 677–745 (CLALSGHDKT…KNSIKLRLNR (69 aa)) is required for interaction with NUDT21. Low complexity predominate over residues 694–704 (TETSTTQSETI). N6-acetyllysine; alternate is present on K736. Residue K736 forms a Glycyl lysine isopeptide (Lys-Gly) (interchain with G-Cter in SUMO); alternate linkage. Position 738 is a phosphoserine (S738). N6-acetyllysine; alternate is present on K740. Residue K740 forms a Glycyl lysine isopeptide (Lys-Gly) (interchain with G-Cter in SUMO); alternate linkage.

Belongs to the poly(A) polymerase family. As to quaternary structure, monomer. Found in a complex with CPSF1, FIP1L1 and PAPOLA. Interacts with AHCYL1 and FIP1L1; the interaction with AHCYL1 seems to increase interaction with FIP1L1. Interacts with NUDT21; the interaction is diminished by acetylation. Interacts with KPNB1; the interaction promotes PAP nuclear import and is inhibited by acetylation of PAP. It depends on Mg(2+) as a cofactor. Mn(2+) serves as cofactor. Polysumoylated. Varying sumoylation depending on tissue- and cell-type. Highly sumoylated in bladder and NIH 3T3 cells. Sumoylation is required for nuclear localization and enhances PAP stability. Desumoylated by SENP1. Inhibits polymerase activity. Post-translationally, hyperphosphorylation on multiple CDK2 consensus and non-consensus sites in the C-terminal Ser/Thr-rich region represses PAP activity in late M-phase. Phosphorylation/dephosphorylation may regulate the interaction between PAP and CPSF. In terms of processing, acetylated in the C-terminus. Acetylation decreases interaction with NUDT21 and KPNB1, and inhibits nuclear localization through inhibiting binding to the importin alpha/beta complex.

It is found in the cytoplasm. The protein resides in the nucleus. It carries out the reaction RNA(n) + ATP = RNA(n)-3'-adenine ribonucleotide + diphosphate. Its function is as follows. Polymerase that creates the 3'-poly(A) tail of mRNA's. Also required for the endoribonucleolytic cleavage reaction at some polyadenylation sites. May acquire specificity through interaction with a cleavage and polyadenylation specificity factor (CPSF) at its C-terminus. The sequence is that of Poly(A) polymerase alpha (PAPOLA) from Homo sapiens (Human).